Reading from the N-terminus, the 257-residue chain is Metallo-beta-lactamase type 2 (257 aa).

An N-terminal signal peptide occupies residues Met1–Ala30. Residues His116, His118, Asp120, His179, and Cys198 each coordinate Zn(2+). Substrate is bound by residues Lys201 and Asn210. His240 contacts Zn(2+).

It belongs to the metallo-beta-lactamase superfamily. Class-B beta-lactamase family. Monomer. The cofactor is Zn(2+).

The protein localises to the periplasm. It carries out the reaction a beta-lactam + H2O = a substituted beta-amino acid. In terms of biological role, confers resistance to the different beta-lactams antibiotics (penicillin, cephalosporin and carbapenem) via the hydrolysis of the beta-lactam ring. The polypeptide is Metallo-beta-lactamase type 2 (Bacillus sp. (strain 170)).